A 406-amino-acid chain; its full sequence is Putative F-box protein At5g38270 (406 aa).

An F-box domain is found at 20–67 (HDWSKLCPDILRSILESLSSTDFHRAKTVCSDWYSNWKTCVKPLCPWR).

This is Putative F-box protein At5g38270 from Arabidopsis thaliana (Mouse-ear cress).